Consider the following 276-residue polypeptide: 2-dehydro-3-deoxyphosphooctonate aldolase (276 aa).

Belongs to the KdsA family.

It localises to the cytoplasm. The catalysed reaction is D-arabinose 5-phosphate + phosphoenolpyruvate + H2O = 3-deoxy-alpha-D-manno-2-octulosonate-8-phosphate + phosphate. It participates in carbohydrate biosynthesis; 3-deoxy-D-manno-octulosonate biosynthesis; 3-deoxy-D-manno-octulosonate from D-ribulose 5-phosphate: step 2/3. This chain is 2-dehydro-3-deoxyphosphooctonate aldolase, found in Stenotrophomonas maltophilia (strain K279a).